The chain runs to 591 residues: Aspartate--tRNA(Asp/Asn) ligase (591 aa).

Residue Glu-174 coordinates L-aspartate. Residues 198–201 (QLFK) are aspartate. Arg-220 contributes to the L-aspartate binding site. ATP is bound by residues 220–222 (RDE) and Gln-229. His-450 is an L-aspartate binding site. Residue Glu-483 coordinates ATP. Arg-490 is an L-aspartate binding site. Residue 535 to 538 (GLDR) participates in ATP binding.

It belongs to the class-II aminoacyl-tRNA synthetase family. Type 1 subfamily. In terms of assembly, homodimer.

It is found in the cytoplasm. It catalyses the reaction tRNA(Asx) + L-aspartate + ATP = L-aspartyl-tRNA(Asx) + AMP + diphosphate. Its function is as follows. Aspartyl-tRNA synthetase with relaxed tRNA specificity since it is able to aspartylate not only its cognate tRNA(Asp) but also tRNA(Asn). Reaction proceeds in two steps: L-aspartate is first activated by ATP to form Asp-AMP and then transferred to the acceptor end of tRNA(Asp/Asn). The chain is Aspartate--tRNA(Asp/Asn) ligase from Pseudomonas syringae pv. syringae (strain B728a).